We begin with the raw amino-acid sequence, 1480 residues long: Nonribosomal peptide synthetase inpA (1480 aa).

The span at 1 to 17 (MSHSMSSSSSSSSSSSS) shows a compositional bias: low complexity. The tract at residues 1–24 (MSHSMSSSSSSSSSSSSSRDEGQS) is disordered. The condensation stretch occupies residues 44–458 (VQDVYPCTPL…QLISPQDLDQ (415 aa)). Residues 479–871 (QRHIDTRPDA…GRKDSQVKIR (393 aa)) form an adenylation region. Residues 1003 to 1082 (DSTNKVALRL…GLAAMITSPH (80 aa)) enclose the Carrier domain. At Ser1041 the chain carries O-(pantetheine 4'-phosphoryl)serine. The thioesterase (TE) domain stretch occupies residues 1117–1436 (KVFLTGATGL…VLAMLQDPQM (320 aa)).

This sequence belongs to the NRP synthetase family.

Its pathway is secondary metabolite biosynthesis. In terms of biological role, nonribosomal peptide synthetase; part of the inp gene cluster that mediates the biosynthesis of fellutamide B, a mycotoxin that acts as a proteasome inhibitor. In the first step of fellutabmide B biosynthesis, inpC activates 3-hydroxydodecanoic acid to generate 3-hydroxydodecanoyl-AMP that is then loaded onto the T0 domain of inpB. The 3-hydroxydodecanoyl-S-phosphopantetheinyl-T0 is sequentially extended with L-Asn and L-Gln by the two CAT modules of inpB. The linear lipodipeptide from inpB is then transferred onto inpA for the addition of the third amino acid, L-Leu. Reductive releasing of the lipotripeptide by the TE domain of inpA produces (2S)-fellutamide B. InpF might be involved in the release and transfer of the lipodipeptide from inpB to inpA. The inp cluster-encoded proteasome subunit inpE confers resistance to internally produced fellutamides. The MFS efflux transporter inpD may contribute to fellutamide resistance as well. The protein is Nonribosomal peptide synthetase inpA of Emericella nidulans (strain FGSC A4 / ATCC 38163 / CBS 112.46 / NRRL 194 / M139) (Aspergillus nidulans).